We begin with the raw amino-acid sequence, 180 residues long: UPF0340 protein llmg_0465 (180 aa).

It belongs to the UPF0340 family.

In Lactococcus lactis subsp. cremoris (strain MG1363), this protein is UPF0340 protein llmg_0465.